The following is a 406-amino-acid chain: uncharacterized protein (406 aa).

The tract at residues 1 to 36 (MDRVRSLIGNRRGRRHNRQHPPYPHSGSPSTVNLLG) is disordered.

This sequence to yeast YMR316w.

This is an uncharacterized protein from Saccharomyces cerevisiae (strain ATCC 204508 / S288c) (Baker's yeast).